A 390-amino-acid polypeptide reads, in one-letter code: Dual-specificity RNA methyltransferase RlmN (390 aa).

Glutamate 110 (proton acceptor) is an active-site residue. Residues 116 to 355 (EADRATLCVS…VIIRKTRGDD (240 aa)) form the Radical SAM core domain. Cysteine 123 and cysteine 360 are oxidised to a cystine. [4Fe-4S] cluster is bound by residues cysteine 130, cysteine 134, and cysteine 137. S-adenosyl-L-methionine contacts are provided by residues 184–185 (GE), serine 216, 238–240 (SLH), and asparagine 317. Cysteine 360 acts as the S-methylcysteine intermediate in catalysis.

This sequence belongs to the radical SAM superfamily. RlmN family. The cofactor is [4Fe-4S] cluster.

It is found in the cytoplasm. The catalysed reaction is adenosine(2503) in 23S rRNA + 2 reduced [2Fe-2S]-[ferredoxin] + 2 S-adenosyl-L-methionine = 2-methyladenosine(2503) in 23S rRNA + 5'-deoxyadenosine + L-methionine + 2 oxidized [2Fe-2S]-[ferredoxin] + S-adenosyl-L-homocysteine. The enzyme catalyses adenosine(37) in tRNA + 2 reduced [2Fe-2S]-[ferredoxin] + 2 S-adenosyl-L-methionine = 2-methyladenosine(37) in tRNA + 5'-deoxyadenosine + L-methionine + 2 oxidized [2Fe-2S]-[ferredoxin] + S-adenosyl-L-homocysteine. Functionally, specifically methylates position 2 of adenine 2503 in 23S rRNA and position 2 of adenine 37 in tRNAs. m2A2503 modification seems to play a crucial role in the proofreading step occurring at the peptidyl transferase center and thus would serve to optimize ribosomal fidelity. The chain is Dual-specificity RNA methyltransferase RlmN from Haemophilus influenzae (strain ATCC 51907 / DSM 11121 / KW20 / Rd).